The primary structure comprises 136 residues: Large ribosomal subunit protein bL19 (136 aa).

The interval 1–23 (MEETVNNQETPETSEEETADEET) is disordered. A compositionally biased stretch (acidic residues) spans 12 to 23 (ETSEEETADEET).

It belongs to the bacterial ribosomal protein bL19 family.

This protein is located at the 30S-50S ribosomal subunit interface and may play a role in the structure and function of the aminoacyl-tRNA binding site. This Dehalococcoides mccartyi (strain ATCC BAA-2266 / KCTC 15142 / 195) (Dehalococcoides ethenogenes (strain 195)) protein is Large ribosomal subunit protein bL19.